Consider the following 659-residue polypeptide: Anoctamin-10 (659 aa).

At 1–207 (MRVTLSTLDT…DSIRSYFGET (207 aa)) the chain is on the cytoplasmic side. Residues 208–228 (IALYFGFLEYFTFALIPMAII) form a helical membrane-spanning segment. The Extracellular segment spans residues 229–240 (GLPYYLFVWEDY). A helical transmembrane segment spans residues 241-261 (DKYVIFASFNLIWSTVILEVW). Residues 262–316 (KRGCANMTYRWGTLVMKRQFEEPRPGFHGVLGINSVTGREEPLYSSYKRQLRIYL) are Cytoplasmic-facing. The helical transmembrane segment at 317-337 (VSLPFVCLCLYFSLYVMMIYF) threads the bilayer. Over 338–352 (DMEDWALSLHEDSGS) the chain is Extracellular. Residues 353–373 (EWTSLLLYVPSIVYAVVIEIM) form a helical membrane-spanning segment. The Cytoplasmic segment spans residues 374–400 (NRLYRYAAEFLTSWENHRLESAYQNHL). The helical transmembrane segment at 401–421 (VLKVLVFNFLNCFASLFYIAF) threads the bilayer. Residues 422–500 (VLKDMKLLRQ…YLGTFDDYLE (79 aa)) lie on the Extracellular side of the membrane. Residues 501–521 (LFLQFGYVSLFSCVYPLAAAF) traverse the membrane as a helical segment. Residues 522 to 553 (AVLNNFTEVNSDALKMCRVFKRPFAEPSASIG) are Cytoplasmic-facing. A helical transmembrane segment spans residues 554-574 (VWQLAFETMSVISVVTNCALI). Residues 575–590 (GMSPQVNAVFPESKTD) are Extracellular-facing. The helical transmembrane segment at 591 to 611 (LVLIVVAVEHALLALKFILAF) threads the bilayer. Residues 612-659 (AIPDKPRHIQQKLARLEFESLEALKQQQMKLVAENLKEEYQEDGKEAT) lie on the Cytoplasmic side of the membrane.

The protein belongs to the anoctamin family. In terms of tissue distribution, predominant expression seen in epithelial tissues.

The protein resides in the cell membrane. In terms of biological role, does not exhibit calcium-activated chloride channel (CaCC) activity. Can inhibit the activity of ANO1. In Mus musculus (Mouse), this protein is Anoctamin-10 (Ano10).